Reading from the N-terminus, the 339-residue chain is Type IV secretion system protein PtlH homolog (339 aa).

The protein belongs to the GSP E family.

This Bordetella bronchiseptica (strain ATCC BAA-588 / NCTC 13252 / RB50) (Alcaligenes bronchisepticus) protein is Type IV secretion system protein PtlH homolog (ptlH).